The chain runs to 214 residues: RNA pyrophosphohydrolase (214 aa).

Residues 6 to 149 (GFRPNVGIIL…KRDVYQLALT (144 aa)) enclose the Nudix hydrolase domain. A Nudix box motif is present at residues 38 to 59 (GGIKYGETPMQAMYRELHEETG).

The protein belongs to the Nudix hydrolase family. RppH subfamily. Requires a divalent metal cation as cofactor.

Accelerates the degradation of transcripts by removing pyrophosphate from the 5'-end of triphosphorylated RNA, leading to a more labile monophosphorylated state that can stimulate subsequent ribonuclease cleavage. The polypeptide is RNA pyrophosphohydrolase (Burkholderia cenocepacia (strain HI2424)).